A 232-amino-acid chain; its full sequence is Probable ADP-ribosylation factor GTPase-activating protein AGD15 (232 aa).

An Arf-GAP domain is found at 16 to 130 (SKILEALLKH…RWVSPGAIQP (115 aa)). The C4-type zinc-finger motif lies at 31-54 (CADCRSKAPRWASVNLGIFICMQC). The interval 203-232 (PNQKNENFSSEVNQNRRTTIAPPSSWATFD) is disordered. Over residues 206–232 (KNENFSSEVNQNRRTTIAPPSSWATFD) the composition is skewed to polar residues.

Its function is as follows. GTPase-activating protein (GAP) for ADP ribosylation factor (ARF). The polypeptide is Probable ADP-ribosylation factor GTPase-activating protein AGD15 (AGD15) (Arabidopsis thaliana (Mouse-ear cress)).